The primary structure comprises 215 residues: Nucleoredoxin-like protein 1 (215 aa).

Positions 1–165 (MADLFLDKIL…VSEIIDRSFL (165 aa)) constitute a Thioredoxin; atypical domain. Basic and acidic residues predominate over residues 185–194 (IKYKDETTNE). Residues 185-215 (IKYKDETTNEKKKRKHCDDEDEGGGGGTEFF) form a disordered region.

The protein belongs to the nucleoredoxin family.

The protein localises to the cell projection. It is found in the cilium. The protein resides in the photoreceptor outer segment. Its function is as follows. Plays an important role in retinal cone photoreceptor survival. May play a role in cone cell viability, slowing down cone degeneration, does not seem to play a role in degenerating rods. The protein is Nucleoredoxin-like protein 1 (nxnl1) of Xenopus laevis (African clawed frog).